The primary structure comprises 185 residues: Probable nicotinate-nucleotide adenylyltransferase (185 aa).

This sequence belongs to the NadD family.

It carries out the reaction nicotinate beta-D-ribonucleotide + ATP + H(+) = deamido-NAD(+) + diphosphate. Its pathway is cofactor biosynthesis; NAD(+) biosynthesis; deamido-NAD(+) from nicotinate D-ribonucleotide: step 1/1. Catalyzes the reversible adenylation of nicotinate mononucleotide (NaMN) to nicotinic acid adenine dinucleotide (NaAD). The chain is Probable nicotinate-nucleotide adenylyltransferase from Methylorubrum extorquens (strain CM4 / NCIMB 13688) (Methylobacterium extorquens).